We begin with the raw amino-acid sequence, 130 residues long: Dihydroneopterin aldolase (130 aa).

Substrate is bound by residues E22, Y54, and 73–74; that span reads IE. K100 serves as the catalytic Proton donor/acceptor.

The protein belongs to the DHNA family.

It catalyses the reaction 7,8-dihydroneopterin = 6-hydroxymethyl-7,8-dihydropterin + glycolaldehyde. It functions in the pathway cofactor biosynthesis; tetrahydrofolate biosynthesis; 2-amino-4-hydroxy-6-hydroxymethyl-7,8-dihydropteridine diphosphate from 7,8-dihydroneopterin triphosphate: step 3/4. Catalyzes the conversion of 7,8-dihydroneopterin to 6-hydroxymethyl-7,8-dihydropterin. This chain is Dihydroneopterin aldolase (folB), found in Methylorubrum extorquens (strain ATCC 14718 / DSM 1338 / JCM 2805 / NCIMB 9133 / AM1) (Methylobacterium extorquens).